Reading from the N-terminus, the 28-residue chain is Kalata-B12 (28 aa).

Residues 1–28 constitute a cross-link (cyclopeptide (Gly-Asp)); the sequence is GSLCGDTCFVLGCNDSSCSCNYPICVKD. Disulfide bonds link cysteine 4-cysteine 18, cysteine 8-cysteine 20, and cysteine 13-cysteine 25.

Post-translationally, this is a cyclic peptide.

Functionally, probably participates in a plant defense mechanism. The polypeptide is Kalata-B12 (Oldenlandia affinis).